The primary structure comprises 219 residues: Trafficking protein particle complex subunit 4 (219 aa).

Belongs to the TRAPP small subunits family. TRAPPC4 subfamily. Component of the multisubunit TRAPP (transport protein particle) complex, which includes at least TRAPPC2, TRAPPC2L, TRAPPC3, TRAPPC3L, TRAPPC4, TRAPPC5, TRAPPC8, TRAPPC9, TRAPPC10, TRAPPC11 and TRAPPC12. Interacts with SDC2.

The protein localises to the postsynaptic cell membrane. Its subcellular location is the golgi apparatus membrane. It localises to the endoplasmic reticulum. It is found in the vesicle. Core component of the TRAPP complexes which has a function of guanine nucleotide exchange factor activity for Rab1 GTPase. Plays a role in vesicular transport from endoplasmic reticulum to Golgi and autophagy. May play a role in dendrite postsynaptic membrane trafficking. This chain is Trafficking protein particle complex subunit 4, found in Homo sapiens (Human).